The following is a 112-amino-acid chain: Large ribosomal subunit protein eL36y (112 aa).

Positions 79-88 (KLGTHKRAKR) are enriched in basic residues. Positions 79 to 112 (KLGTHKRAKRKREEMSSVLRKMRSGGGGATEKKK) are disordered. The span at 102–112 (SGGGGATEKKK) shows a compositional bias: gly residues.

The protein belongs to the eukaryotic ribosomal protein eL36 family.

The sequence is that of Large ribosomal subunit protein eL36y (RPL36B) from Arabidopsis thaliana (Mouse-ear cress).